A 309-amino-acid polypeptide reads, in one-letter code: Porphobilinogen deaminase (309 aa).

The residue at position 244 (cysteine 244) is an S-(dipyrrolylmethanemethyl)cysteine.

This sequence belongs to the HMBS family. Monomer. Requires dipyrromethane as cofactor.

It catalyses the reaction 4 porphobilinogen + H2O = hydroxymethylbilane + 4 NH4(+). It functions in the pathway porphyrin-containing compound metabolism; protoporphyrin-IX biosynthesis; coproporphyrinogen-III from 5-aminolevulinate: step 2/4. Its function is as follows. Tetrapolymerization of the monopyrrole PBG into the hydroxymethylbilane pre-uroporphyrinogen in several discrete steps. The protein is Porphobilinogen deaminase of Listeria innocua serovar 6a (strain ATCC BAA-680 / CLIP 11262).